We begin with the raw amino-acid sequence, 262 residues long: Small ribosomal subunit protein eS1 (262 aa).

Belongs to the eukaryotic ribosomal protein eS1 family. In terms of assembly, component of the small ribosomal subunit. Mature ribosomes consist of a small (40S) and a large (60S) subunit. The 40S subunit contains about 33 different proteins and 1 molecule of RNA (18S). The 60S subunit contains about 49 different proteins and 3 molecules of RNA (25S, 5.8S and 5S).

Its subcellular location is the cytoplasm. This is Small ribosomal subunit protein eS1 from Plasmodium vivax (strain Salvador I).